A 305-amino-acid polypeptide reads, in one-letter code: UDP-N-acetylenolpyruvoylglucosamine reductase 2 (305 aa).

The FAD-binding PCMH-type domain maps to 33–197 (VGGKADVFVA…LEARFELEEG (165 aa)). Arginine 176 is an active-site residue. Serine 226 functions as the Proton donor in the catalytic mechanism. The active site involves glutamate 296.

This sequence belongs to the MurB family. FAD serves as cofactor.

It localises to the cytoplasm. It catalyses the reaction UDP-N-acetyl-alpha-D-muramate + NADP(+) = UDP-N-acetyl-3-O-(1-carboxyvinyl)-alpha-D-glucosamine + NADPH + H(+). The protein operates within cell wall biogenesis; peptidoglycan biosynthesis. In terms of biological role, cell wall formation. This chain is UDP-N-acetylenolpyruvoylglucosamine reductase 2 (murB2), found in Bacillus anthracis.